The chain runs to 565 residues: Urease subunit beta (565 aa).

One can recognise a Urease domain in the interval glycine 130–isoleucine 565. Histidine 135, histidine 137, and lysine 218 together coordinate Ni(2+). Lysine 218 is modified (N6-carboxylysine). Histidine 220 is a substrate binding site. Histidine 247 and histidine 273 together coordinate Ni(2+). The Proton donor role is filled by histidine 321. Ni(2+) is bound at residue aspartate 361.

It belongs to the metallo-dependent hydrolases superfamily. Urease alpha subunit family. In terms of assembly, heterohexamer of 3 UreA (alpha) and 3 UreB (beta) subunits. Requires Ni cation as cofactor. In terms of processing, carboxylation allows a single lysine to coordinate two nickel ions.

Its subcellular location is the cytoplasm. The enzyme catalyses urea + 2 H2O + H(+) = hydrogencarbonate + 2 NH4(+). It participates in nitrogen metabolism; urea degradation; CO(2) and NH(3) from urea (urease route): step 1/1. This Campylobacter lari protein is Urease subunit beta.